We begin with the raw amino-acid sequence, 489 residues long: Cobyric acid synthase (489 aa).

A GATase cobBQ-type domain is found at 247–439 (ALKVVVPVLP…IHGVFDEPAA (193 aa)). Cys328 (nucleophile) is an active-site residue. Residue His431 is part of the active site.

Belongs to the CobB/CobQ family. CobQ subfamily.

It participates in cofactor biosynthesis; adenosylcobalamin biosynthesis. Catalyzes amidations at positions B, D, E, and G on adenosylcobyrinic A,C-diamide. NH(2) groups are provided by glutamine, and one molecule of ATP is hydrogenolyzed for each amidation. In Marinobacter nauticus (strain ATCC 700491 / DSM 11845 / VT8) (Marinobacter aquaeolei), this protein is Cobyric acid synthase.